Reading from the N-terminus, the 527-residue chain is uncharacterized protein (527 aa).

The region spanning Met1 to Thr93 is the PE domain. Composition is skewed to gly residues over residues Ile264 to Gly286, Gly292 to Gly384, and Asn472 to Arg515. Disordered regions lie at residues Ile264 to Gly384 and Asn472 to Gln527.

Belongs to the mycobacterial PE family. PGRS subfamily.

This is an uncharacterized protein from Mycobacterium tuberculosis (strain CDC 1551 / Oshkosh).